The chain runs to 117 residues: Protein TCL1B2 (117 aa).

Belongs to the TCL1 family.

This chain is Protein TCL1B2 (Tcl1b2), found in Mus musculus (Mouse).